Consider the following 327-residue polypeptide: DNA-directed RNA polymerase subunit alpha (327 aa).

The interval Met1–Glu233 is alpha N-terminal domain (alpha-NTD). The segment at Leu267–Lys327 is alpha C-terminal domain (alpha-CTD).

It belongs to the RNA polymerase alpha chain family. As to quaternary structure, in plastids the minimal PEP RNA polymerase catalytic core is composed of four subunits: alpha, beta, beta', and beta''. When a (nuclear-encoded) sigma factor is associated with the core the holoenzyme is formed, which can initiate transcription.

It localises to the plastid. The protein resides in the chloroplast. It catalyses the reaction RNA(n) + a ribonucleoside 5'-triphosphate = RNA(n+1) + diphosphate. DNA-dependent RNA polymerase catalyzes the transcription of DNA into RNA using the four ribonucleoside triphosphates as substrates. The polypeptide is DNA-directed RNA polymerase subunit alpha (Lepidium virginicum (Virginia pepperweed)).